The sequence spans 235 residues: Glucosamine-6-phosphate deaminase (235 aa).

Residue D62 is the Proton acceptor; for enolization step of the active site. N128 serves as the catalytic For ring-opening step. The active-site Proton acceptor; for ring-opening step is the H130. The For ring-opening step role is filled by E135.

Belongs to the glucosamine/galactosamine-6-phosphate isomerase family. NagB subfamily.

It carries out the reaction alpha-D-glucosamine 6-phosphate + H2O = beta-D-fructose 6-phosphate + NH4(+). Its pathway is amino-sugar metabolism; N-acetylneuraminate degradation; D-fructose 6-phosphate from N-acetylneuraminate: step 5/5. Functionally, catalyzes the reversible isomerization-deamination of glucosamine 6-phosphate (GlcN6P) to form fructose 6-phosphate (Fru6P) and ammonium ion. This chain is Glucosamine-6-phosphate deaminase, found in Streptococcus gordonii (strain Challis / ATCC 35105 / BCRC 15272 / CH1 / DL1 / V288).